The chain runs to 684 residues: Pentatricopeptide repeat-containing protein At4g14850 (684 aa).

PPR repeat units lie at residues 5–39 (SADALGLLLKNAISASSMRLGRVVHARIVKTLDSP), 41–71 (PPFLANYLINMYSKLDHPESARLVLRLTPAR), 72–106 (NVVSWTSLISGLAQNGHFSTALVEFFEMRREGVVP), 107–141 (NDFTFPCAFKAVASLRLPVTGKQIHALAVKCGRIL), 142–172 (DVFVGCSAFDMYCKTRLRDDARKLFDEIPER), 173–207 (NLETWNAFISNSVTDGRPREAIEAFIEFRRIDGHP), 208–242 (NSITFCAFLNACSDWLHLNLGMQLHGLVLRSGFDT), 243–277 (DVSVCNGLIDFYGKCKQIRSSEIIFTEMGTKNAVS), 278–308 (WCSLVAAYVQNHEDEKASVLYLRSRKDIVET), 309–343 (SDFMISSVLSACAGMAGLELGRSIHAHAVKACVER), 344–374 (TIFVGSALVDMYGKCGCIEDSEQAFDEMPEK), 375–409 (NLVTRNSLIGGYAHQGQVDMALALFEEMAPRGCGP), 412–442 (NYMTFVSLLSACSRAGAVENGMKIFDSMRST), and 448–478 (GAEHYSCIVDMLGRAGMVERAYEFIKKMPIQ). Residues 483–558 (VWGALQNACR…GAGYSWITVK (76 aa)) form a type E motif; degenerate region. Residues 559-589 (NQVHAFQAKDRSHILNKEIQTTLAKLRNEME) are type E(+) motif; degenerate. The interval 590–684 (AAGYKPDLKL…DGICSCKDYW (95 aa)) is type DYW motif.

Belongs to the PPR family. PCMP-H subfamily.

Acts as a regulatory factor of isoprenoid biosynthesis. Could bind RNA. The polypeptide is Pentatricopeptide repeat-containing protein At4g14850 (LOI1) (Arabidopsis thaliana (Mouse-ear cress)).